A 467-amino-acid chain; its full sequence is tRNA dimethylallyltransferase (467 aa).

The N-terminal 47 residues, M1 to L47, are a transit peptide targeting the mitochondrion. A dimethylallyl diphosphate-binding site is contributed by T32–S37. Interaction with substrate tRNA stretches follow at residues D55–Q58 and R183–R187. The core aggregation region stretch occupies residues F221–H230. Residues Q233–E255 are interaction with isopentenylpyrophosphate transferase. Interaction with substrate tRNA stretches follow at residues Q281–I283 and A313–N331. The Matrin-type zinc-finger motif lies at H395–K425. Positions D432–V467 are disordered. Phosphoserine occurs at positions 443 and 455.

Belongs to the IPP transferase family.

Its subcellular location is the mitochondrion. It is found in the cytoplasm. The protein resides in the nucleus. The catalysed reaction is adenosine(37) in tRNA + dimethylallyl diphosphate = N(6)-dimethylallyladenosine(37) in tRNA + diphosphate. In terms of biological role, catalyzes the transfer of a dimethylallyl group onto the adenine at position 37 of both cytosolic and mitochondrial tRNAs, leading to the formation of N6-(dimethylallyl)adenosine (i6A37). Mediates modification of a limited subset of tRNAs: tRNA(Ser)(AGA), tRNA(Ser)(CGA), tRNA(Ser)(UGA), as well as partial modification of the selenocysteine tRNA(Ser)(UCA). TRIT1 is therefore required for selenoprotein expression. The chain is tRNA dimethylallyltransferase (Trit1) from Mus musculus (Mouse).